Here is a 430-residue protein sequence, read N- to C-terminus: Adenylosuccinate synthetase (430 aa).

GTP is bound by residues glycine 12–lysine 18 and glycine 40–threonine 42. The Proton acceptor role is filled by aspartate 13. 2 residues coordinate Mg(2+): aspartate 13 and glycine 40. IMP contacts are provided by residues aspartate 13–lysine 16, asparagine 38–histidine 41, threonine 128, arginine 142, glutamine 223, threonine 238, and arginine 302. Residue histidine 41 is the Proton donor of the active site. Threonine 298 to arginine 304 is a substrate binding site. Residues arginine 304, serine 330–aspartate 332, and serine 413–glycine 415 contribute to the GTP site.

The protein belongs to the adenylosuccinate synthetase family. In terms of assembly, homodimer. The cofactor is Mg(2+).

It is found in the cytoplasm. The catalysed reaction is IMP + L-aspartate + GTP = N(6)-(1,2-dicarboxyethyl)-AMP + GDP + phosphate + 2 H(+). Its pathway is purine metabolism; AMP biosynthesis via de novo pathway; AMP from IMP: step 1/2. Its function is as follows. Plays an important role in the de novo pathway of purine nucleotide biosynthesis. Catalyzes the first committed step in the biosynthesis of AMP from IMP. The polypeptide is Adenylosuccinate synthetase (Lactococcus lactis subsp. cremoris (strain SK11)).